The primary structure comprises 435 residues: Diguanylate cyclase TpbB (435 aa).

At 1–22 the chain is on the cytoplasmic side; sequence MNRRRRYTGSNPSLRRVLYRAH. A helical membrane pass occupies residues 23 to 43; it reads LGVALVAVFTAGLAVTLVGLL. At 44–154 the chain is on the periplasmic side; the sequence is TLRAYADPNQ…VKGSGGSLLR (111 aa). Residues 155–175 form a helical membrane-spanning segment; that stretch reads FLLTGFAGMVLCLLLTALGAF. Residues 176 to 435 are Cytoplasmic-facing; that stretch reads YLSRRLVRGI…DSATPEAPPK (260 aa). One can recognise an HAMP domain in the interval 183–236; sequence RGIVGPLDQLAKVAHTVRRERDFEKRVPEAGIAELSQLGEDFNALLDELESWQA. The GGDEF domain maps to 279-415; sequence EQLAVLFIDS…GSRRLAELND (137 aa). Serine 288 and aspartate 330 together coordinate Mg(2+). Aspartate 330 (proton acceptor) is an active-site residue. The span at 414–426 shows a compositional bias: basic and acidic residues; that stretch reads NDPRILQEEKEID. Residues 414 to 435 are disordered; sequence NDPRILQEEKEIDSATPEAPPK.

It depends on Mg(2+) as a cofactor. Post-translationally, phosphorylated at both Tyr residues and Ser/Thr residues. Dephosphorylated and inactivated by TpbA.

It is found in the cell inner membrane. It catalyses the reaction 2 GTP = 3',3'-c-di-GMP + 2 diphosphate. The protein operates within purine metabolism; 3',5'-cyclic di-GMP biosynthesis. With respect to regulation, activity is tightly controlled by YfiR, a small periplasmic protein, and the OmpA/Pal-like outer-membrane lipoprotein YfiB. Diguanylate cyclase activity is inhibited by the specific interaction of YfiR with the TpbB periplasmic domain and is activated by YfiB, which releases the YfiR-mediated repression through sequestration of YfiR to the outer membrane. Activity is also controlled by dephosphorylation of the periplasmic domain by the tyrosine phosphatase TpbA. Catalyzes the synthesis of cyclic-di-GMP (c-di-GMP) via the condensation of 2 GTP molecules. Important for the regulation of biofilm maintenance when exposed to peroxide. In terms of biological role, part of the YfiB-TpbB-YfiR (or yfiBNR) system, encoding a tripartite signaling module that modulates intracellular c-di-GMP levels. The system is a key regulator of the small colony variant (SCV) phenotype, and plays an important role in biofilm formation and in vivo persistence. The c-di-GMP produced by TpbB/YfiN stimulates the production of the Pel and Psl exopolysaccharides, which promotes surface attachment, generates an SCV phenotype and confers resistance against phagocytosis. This is Diguanylate cyclase TpbB from Pseudomonas aeruginosa (strain UCBPP-PA14).